A 299-amino-acid polypeptide reads, in one-letter code: ATP phosphoribosyltransferase (299 aa).

Belongs to the ATP phosphoribosyltransferase family. Long subfamily. As to quaternary structure, equilibrium between an active dimeric form, an inactive hexameric form and higher aggregates. Interconversion between the various forms is largely reversible and is influenced by the natural substrates and inhibitors of the enzyme. Mg(2+) serves as cofactor.

Its subcellular location is the cytoplasm. It carries out the reaction 1-(5-phospho-beta-D-ribosyl)-ATP + diphosphate = 5-phospho-alpha-D-ribose 1-diphosphate + ATP. It participates in amino-acid biosynthesis; L-histidine biosynthesis; L-histidine from 5-phospho-alpha-D-ribose 1-diphosphate: step 1/9. Feedback inhibited by histidine. Functionally, catalyzes the condensation of ATP and 5-phosphoribose 1-diphosphate to form N'-(5'-phosphoribosyl)-ATP (PR-ATP). Has a crucial role in the pathway because the rate of histidine biosynthesis seems to be controlled primarily by regulation of HisG enzymatic activity. In Shigella dysenteriae serotype 1 (strain Sd197), this protein is ATP phosphoribosyltransferase.